Consider the following 318-residue polypeptide: Taste receptor type 2 member 7 (318 aa).

At 1–9 the chain is on the extracellular side; that stretch reads MTDKVQTTL. A helical transmembrane segment spans residues 10 to 30; it reads LFLAIGEFSVGILGNAFIGLV. The Cytoplasmic segment spans residues 31–55; it reads NCMDWVKKRKIASIDLILTSLAISR. Residues 56-76 form a helical membrane-spanning segment; sequence ICLLCVILLDCFMLVLYPDVY. Residues 77–94 are Extracellular-facing; the sequence is ATGKQMRIIDFFWTLTNH. The helical transmembrane segment at 95 to 115 threads the bilayer; that stretch reads LSIWFATCLSIYYFFKIANFF. The Cytoplasmic segment spans residues 116 to 128; sequence HPLFLWMKWRIDR. A helical transmembrane segment spans residues 129 to 149; it reads VISWILLGCMVLSVFINLPAT. Over 150–187 the chain is Extracellular; the sequence is ENLNADFRRCVKAKRKTNLTWSCRVTKAQHASTKLFLN. An N-linked (GlcNAc...) asparagine glycan is attached at N167. A helical transmembrane segment spans residues 188 to 208; sequence LVTLLPFSVCLMSFFLLILSL. The Cytoplasmic segment spans residues 209–235; that stretch reads WRHIRRMQLSATGCRDPSTEAHVRALK. Residues 236–256 form a helical membrane-spanning segment; sequence AVISFLLLFIAYYLSFLIATS. The Extracellular portion of the chain corresponds to 257-266; it reads SYFIPETELA. A helical transmembrane segment spans residues 267–287; sequence VIFGEFIALIYPSSHSFILIL. Topologically, residues 288 to 318 are cytoplasmic; it reads GNSKLRRASLKVLWTVMSILKGRKFQQHKQI.

The protein belongs to the G-protein coupled receptor T2R family.

It is found in the membrane. Gustducin-coupled receptor implicated in the perception of bitter compounds in the oral cavity and the gastrointestinal tract. Signals through PLCB2 and the calcium-regulated cation channel TRPM5. The sequence is that of Taste receptor type 2 member 7 (TAS2R7) from Macaca mulatta (Rhesus macaque).